Consider the following 162-residue polypeptide: Ribosome-binding factor A (162 aa).

Residues 123 to 162 form a disordered region; that stretch reads VARVAAGASPAGDPDPYKEPRVEDADDAEVDEPSRSRQAD. Residues 125–136 show a composition bias toward low complexity; it reads RVAAGASPAGDP.

It belongs to the RbfA family. In terms of assembly, monomer. Binds 30S ribosomal subunits, but not 50S ribosomal subunits or 70S ribosomes.

It localises to the cytoplasm. One of several proteins that assist in the late maturation steps of the functional core of the 30S ribosomal subunit. Associates with free 30S ribosomal subunits (but not with 30S subunits that are part of 70S ribosomes or polysomes). Required for efficient processing of 16S rRNA. May interact with the 5'-terminal helix region of 16S rRNA. The sequence is that of Ribosome-binding factor A from Rhodococcus opacus (strain B4).